A 396-amino-acid polypeptide reads, in one-letter code: S-adenosylmethionine synthase (396 aa).

Residue His-16 participates in ATP binding. Asp-18 is a binding site for Mg(2+). Residue Glu-44 participates in K(+) binding. Residues Glu-57 and Gln-100 each contribute to the L-methionine site. The flexible loop stretch occupies residues 100-110; the sequence is QSPDINQGVDR. Residues 165 to 167, 231 to 232, Asp-240, 246 to 247, Ala-263, and Lys-267 each bind ATP; these read DAK, KF, and RK. Position 240 (Asp-240) interacts with L-methionine. Lys-271 is a binding site for L-methionine.

It belongs to the AdoMet synthase family. In terms of assembly, homotetramer; dimer of dimers. It depends on Mg(2+) as a cofactor. The cofactor is K(+).

It localises to the cytoplasm. It catalyses the reaction L-methionine + ATP + H2O = S-adenosyl-L-methionine + phosphate + diphosphate. It functions in the pathway amino-acid biosynthesis; S-adenosyl-L-methionine biosynthesis; S-adenosyl-L-methionine from L-methionine: step 1/1. Its function is as follows. Catalyzes the formation of S-adenosylmethionine (AdoMet) from methionine and ATP. The overall synthetic reaction is composed of two sequential steps, AdoMet formation and the subsequent tripolyphosphate hydrolysis which occurs prior to release of AdoMet from the enzyme. The protein is S-adenosylmethionine synthase of Ectopseudomonas mendocina (strain ymp) (Pseudomonas mendocina).